The primary structure comprises 227 residues: MADS-box transcription factor 25 (227 aa).

The 61-residue stretch at 1 to 61 (MGRGKIAIKR…GRLYDFSSSS (61 aa)) folds into the MADS-box domain. In terms of domain architecture, K-box spans 86-176 (AKFWQREVTT…RKKFNIAHQR (91 aa)). A disordered region spans residues 183-227 (KLNSGESTSSEQVTRSSKDPGESSTPRDSRVCIDLELSQKEVEDE). A compositionally biased stretch (polar residues) spans 186 to 197 (SGESTSSEQVTR). Over residues 198–227 (SSKDPGESSTPRDSRVCIDLELSQKEVEDE) the composition is skewed to basic and acidic residues.

Expressed in seedling roots.

It is found in the nucleus. Its function is as follows. Probable transcription factor. In Oryza sativa subsp. japonica (Rice), this protein is MADS-box transcription factor 25 (MADS25).